A 409-amino-acid polypeptide reads, in one-letter code: Elongation factor Tu, chloroplastic (409 aa).

Positions 10 to 214 (KPHVNIGTIG…AVDAYIPTPE (205 aa)) constitute a tr-type G domain. The interval 19–26 (GHVDHGKT) is G1. 19 to 26 (GHVDHGKT) is a GTP binding site. Residue threonine 26 participates in Mg(2+) binding. The segment at 60-64 (GITIN) is G2. The tract at residues 81 to 84 (DCPG) is G3. GTP contacts are provided by residues 81–85 (DCPGH) and 136–139 (NKQD). Residues 136-139 (NKQD) form a G4 region. Residues 174–176 (SAL) form a G5 region.

The protein belongs to the TRAFAC class translation factor GTPase superfamily. Classic translation factor GTPase family. EF-Tu/EF-1A subfamily.

The protein localises to the plastid. The protein resides in the chloroplast. The enzyme catalyses GTP + H2O = GDP + phosphate + H(+). Functionally, GTP hydrolase that promotes the GTP-dependent binding of aminoacyl-tRNA to the A-site of ribosomes during protein biosynthesis. In Thalassiosira pseudonana (Marine diatom), this protein is Elongation factor Tu, chloroplastic (tufA).